Consider the following 119-residue polypeptide: NADH dehydrogenase [ubiquinone] 1 subunit C2 (119 aa).

The chain crosses the membrane as a helical span at residues 56–75; the sequence is GLHRQLLYITAFFFAGYYLV.

The protein belongs to the complex I NDUFC2 subunit family. In terms of assembly, complex I is composed of 45 different subunits. Interacts with TMEM242.

It localises to the mitochondrion inner membrane. Accessory subunit of the mitochondrial membrane respiratory chain NADH dehydrogenase (Complex I), that is believed not to be involved in catalysis but required for the complex assembly. Complex I functions in the transfer of electrons from NADH to the respiratory chain. The immediate electron acceptor for the enzyme is believed to be ubiquinone. This Gorilla gorilla gorilla (Western lowland gorilla) protein is NADH dehydrogenase [ubiquinone] 1 subunit C2.